A 274-amino-acid polypeptide reads, in one-letter code: Diaminopimelate epimerase (274 aa).

N11, Q44, and N64 together coordinate substrate. The active-site Proton donor is C73. Residues 74-75, N157, N190, and 208-209 each bind substrate; these read GN and ER. The active-site Proton acceptor is the C217. 218–219 is a substrate binding site; that stretch reads GS.

It belongs to the diaminopimelate epimerase family. As to quaternary structure, homodimer (Potential). Previously DapF has been proposed to be a monomer, however it seems that it adopts a dimeric structure.

It localises to the cytoplasm. The enzyme catalyses (2S,6S)-2,6-diaminopimelate = meso-2,6-diaminopimelate. Its pathway is amino-acid biosynthesis; L-lysine biosynthesis via DAP pathway; DL-2,6-diaminopimelate from LL-2,6-diaminopimelate: step 1/1. Inhibited by LL-aziridino (LL-AziDAP), DL-aziridino (DL-AziDAP). Also inhibited by (2S,3R,6S)-2,6-diamino-3-fluoropimelate (L,L-3-fluoro-DAP) and (2R,3S,6S)-2,6-diamino-3-fluoropimelate (D,L-3-fluoro-DAP). In terms of biological role, catalyzes the stereoinversion of LL-2,6-diaminopimelate (L,L-DAP) to meso-diaminopimelate (meso-DAP), a precursor of L-lysine and an essential component of the bacterial peptidoglycan. Only accepts DAP isomers with the L configuration. This Haemophilus influenzae (strain ATCC 51907 / DSM 11121 / KW20 / Rd) protein is Diaminopimelate epimerase.